Reading from the N-terminus, the 769-residue chain is Endonuclease MutS2 (769 aa).

Residue 335 to 342 (GGNAGGKT) coordinates ATP. Positions 694-769 (IDLRGKRADV…GDGMTEVELV (76 aa)) constitute a Smr domain.

It belongs to the DNA mismatch repair MutS family. MutS2 subfamily. In terms of assembly, homodimer. Binds to stalled ribosomes, contacting rRNA.

Functionally, endonuclease that is involved in the suppression of homologous recombination and thus may have a key role in the control of bacterial genetic diversity. In terms of biological role, acts as a ribosome collision sensor, splitting the ribosome into its 2 subunits. Detects stalled/collided 70S ribosomes which it binds and splits by an ATP-hydrolysis driven conformational change. Acts upstream of the ribosome quality control system (RQC), a ribosome-associated complex that mediates the extraction of incompletely synthesized nascent chains from stalled ribosomes and their subsequent degradation. Probably generates substrates for RQC. This chain is Endonuclease MutS2, found in Maridesulfovibrio salexigens (strain ATCC 14822 / DSM 2638 / NCIMB 8403 / VKM B-1763) (Desulfovibrio salexigens).